Consider the following 228-residue polypeptide: uncharacterized protein (228 aa).

In terms of domain architecture, tRNA-binding spans 99-207; it reads LANKVPFVVC…PKIKVGKPFI (109 aa).

This is an uncharacterized protein from Mycoplasma genitalium (strain ATCC 33530 / DSM 19775 / NCTC 10195 / G37) (Mycoplasmoides genitalium).